Here is a 194-residue protein sequence, read N- to C-terminus: MEESVKPVPKHANHRRSSVRSSLYGDVRDLWSTATMSTANVSVSDVCEDFDEEGKSVRNRIRKYSQTISIRDSLNLEPEEIQQQARRELELCHGRSLEHGEDHEESETSLASSTSESLIFSLWKPHRTYWTEQQNRLPLPLMELMETEVLDILKKALITYRSTIGRNHFMTKELQGYIEGIRKRRNKRLYFLDQ.

In terms of assembly, component of the CatSper complex or CatSpermasome composed of the core pore-forming members CATSPER1, CATSPER2, CATSPER3 and CATSPER4 as well as auxiliary members CATSPERB, CATSPERG2, CATSPERD, CATSPERE, CATSPERZ, C2CD6/CATSPERT, SLCO6C1, TMEM249, TMEM262 and EFCAB9. HSPA1 may be an additional auxiliary complex member. The core complex members CATSPER1, CATSPER2, CATSPER3 and CATSPER4 form a heterotetrameric channel. The auxiliary CATSPERB, CATSPERG2, CATSPERD and CATSPERE subunits form a pavilion-like structure over the pore which stabilizes the complex through interactions with CATSPER4, CATSPER3, CATSPER1 and CATSPER2 respectively. SLCO6C1 interacts with CATSPERE and TMEM262/CATSPERH interacts with CATSPERB, further stabilizing the complex. C2CD6/CATSPERT interacts at least with CATSPERD and is required for targeting the CatSper complex in the flagellar membrane. Interacts with EFCAB9; the interaction is direct, Ca(2+)-dependent and connects EFCAB9 with the CatSper complex. Dissociates from EFCAB9 at elevated pH. Testis-specific. Expressed in adult but not in fetal testis. Not expressed in ovary. Within testis, expression is restricted to spermatids.

The protein localises to the cell projection. It localises to the cilium. The protein resides in the flagellum membrane. Functionally, auxiliary component of the CatSper complex, a complex involved in sperm cell hyperactivation. Sperm cell hyperactivation is needed for sperm motility which is essential late in the preparation of sperm for fertilization. Required for a distribution of the CatSper complex in linear quadrilateral nanodomains along the flagellum, maximizing fertilization inside the mammalian female reproductive tract. Together with EFCAB9, associates with the CatSper channel pore and is required for the two-row structure of each single CatSper channel. The sequence is that of Cation channel sperm-associated auxiliary subunit zeta from Mus musculus (Mouse).